The following is an 86-amino-acid chain: MIOREX complex component 7 (86 aa).

As to quaternary structure, associates with the mitochondrial ribosome.

The protein resides in the mitochondrion. In terms of biological role, component of MIOREX complexes, large expressome-like assemblies of ribosomes with factors involved in all the steps of post-transcriptional gene expression. In Saccharomyces cerevisiae (strain ATCC 204508 / S288c) (Baker's yeast), this protein is MIOREX complex component 7.